The sequence spans 327 residues: Annexin A8 (327 aa).

Annexin repeat units follow at residues 21–92, 93–164, 177–249, and 253–324; these read FNPD…ALMY, PPYR…CLLQ, GLAL…TVVK, and NVHS…NLVG. Positions 266, 268, 270, and 310 each coordinate Ca(2+).

The protein belongs to the annexin family.

Its function is as follows. This protein is an anticoagulant protein that acts as an indirect inhibitor of the thromboplastin-specific complex, which is involved in the blood coagulation cascade. The protein is Annexin A8 (Anxa8) of Rattus norvegicus (Rat).